A 227-amino-acid polypeptide reads, in one-letter code: Cytidylate kinase (227 aa).

12–20 (GPSGAGKGT) is an ATP binding site.

It belongs to the cytidylate kinase family. Type 1 subfamily.

It is found in the cytoplasm. The enzyme catalyses CMP + ATP = CDP + ADP. The catalysed reaction is dCMP + ATP = dCDP + ADP. In Marinomonas sp. (strain MWYL1), this protein is Cytidylate kinase.